A 463-amino-acid chain; its full sequence is Secretogranin-3 (463 aa).

A signal peptide spans 1-20 (MGPKYVFITAIIGVFWHVQG). Disordered regions lie at residues 87 to 111 (VKRSGSVRSSVGGHRGTLDDADSTK), 225 to 267 (DDDK…PEED), and 353 to 398 (EDKN…KGKA). Basic and acidic residues-rich tracts occupy residues 102–111 (GTLDDADSTK) and 229–262 (QEGKMETRNKNEDRESSETKNEDSFSSKERRNEL).

As to quaternary structure, interacts with CHGA. Interacts with secretogranin II/SCG2. Interacts (via C-terminus) with CPE.

It localises to the cytoplasmic vesicle. It is found in the secretory vesicle. Its subcellular location is the secretory vesicle membrane. The protein resides in the secreted. In terms of biological role, member of the granin protein family that regulates the biogenesis of secretory granules. Acts as a sorting receptor for intragranular proteins including chromogranin A/CHGA. May also play a role in angiogenesis. Promotes endothelial proliferation, migration and tube formation through MEK/ERK signaling pathway. The sequence is that of Secretogranin-3 (scg3) from Xenopus tropicalis (Western clawed frog).